A 140-amino-acid chain; its full sequence is Phosphoribosyl-AMP cyclohydrolase (140 aa).

Residue D84 coordinates Mg(2+). Residue C85 participates in Zn(2+) binding. Residues D86 and D88 each contribute to the Mg(2+) site. Residues C101 and C108 each contribute to the Zn(2+) site.

This sequence belongs to the PRA-CH family. As to quaternary structure, homodimer. Requires Mg(2+) as cofactor. It depends on Zn(2+) as a cofactor.

The protein resides in the cytoplasm. It carries out the reaction 1-(5-phospho-beta-D-ribosyl)-5'-AMP + H2O = 1-(5-phospho-beta-D-ribosyl)-5-[(5-phospho-beta-D-ribosylamino)methylideneamino]imidazole-4-carboxamide. It participates in amino-acid biosynthesis; L-histidine biosynthesis; L-histidine from 5-phospho-alpha-D-ribose 1-diphosphate: step 3/9. Its function is as follows. Catalyzes the hydrolysis of the adenine ring of phosphoribosyl-AMP. This chain is Phosphoribosyl-AMP cyclohydrolase, found in Chloroherpeton thalassium (strain ATCC 35110 / GB-78).